Consider the following 506-residue polypeptide: Galactose/methyl galactoside import ATP-binding protein MglA (506 aa).

ABC transporter domains are found at residues 14–249 (LEMK…VGRS) and 264–506 (VMLE…SLYL). 46–53 (GENGAGKS) contributes to the ATP binding site.

This sequence belongs to the ABC transporter superfamily. Galactose/methyl galactoside importer (TC 3.A.1.2.3) family. The complex is composed of one ATP-binding protein (MglA), two transmembrane proteins (MglC) and a solute-binding protein (MglB).

It localises to the cell inner membrane. The enzyme catalyses D-galactose(out) + ATP + H2O = D-galactose(in) + ADP + phosphate + H(+). It carries out the reaction methyl beta-D-galactoside(out) + ATP + H2O = methyl beta-D-galactoside(in) + ADP + phosphate + H(+). Functionally, part of the ABC transporter complex MglABC involved in galactose/methyl galactoside import. Responsible for energy coupling to the transport system. The polypeptide is Galactose/methyl galactoside import ATP-binding protein MglA (Sodalis glossinidius (strain morsitans)).